We begin with the raw amino-acid sequence, 58 residues long: Metallothionein (58 aa).

The beta stretch occupies residues 1-29 (PDPCCAEGTCECEEGKCKAGCKCTSCRCS). A divalent metal cation contacts are provided by C4, C5, C10, C12, C17, C21, C23, C26, C28, C31, C34, C38, C40, C46, C50, C54, C56, and C57. Residues 30 to 58 (PCEKCTSECECKSKEECAKNCTKPCSCCP) are alpha.

Functionally, metallothioneins have a high content of cysteine residues that bind various heavy metals. Class I MTS in crustacea are involved in the sequestration of elevated levels of heavy-metal ions. This is Metallothionein from Potamon potamios.